The sequence spans 1356 residues: Serine/threonine-protein kinase PSK1 (1356 aa).

Ser10 carries the post-translational modification Phosphoserine. The tract at residues 20 to 115 (KHAITHKGTS…SVDSTVSSPL (96 aa)) is disordered. Polar residues-rich tracts occupy residues 26–37 (KGTSSSVASLQT) and 54–64 (YDTSLSDVSTP). The segment covering 99-115 (LPSTASSSVDSTVSSPL) has biased composition (low complexity). Ser192, Ser202, Ser255, Ser286, and Ser327 each carry phosphoserine. The PAS 1 domain maps to 450–518 (RTFTSTKNSA…VLHKLLSTEG (69 aa)). Low complexity predominate over residues 592–608 (PTLSSSSTLSLPKMASS). Disordered stretches follow at residues 592–612 (PTLSSSSTLSLPKMASSPTGS) and 627–660 (YTKPTSTENRNGDENQLDGDSHSEPSLSSSPVRS). Residues 738 to 807 (LKLKIHSLPY…FINDKYPALD (70 aa)) enclose the PAS 2 domain. Ser926 bears the Phosphoserine mark. Residues 948 to 972 (DSRAHSQSTLSEQEQVPLENDKDSG) form a disordered region. A compositionally biased stretch (polar residues) spans 952–961 (HSQSTLSEQE). A phosphoserine mark is found at Ser1018, Ser1023, Ser1035, and Ser1055. A compositionally biased stretch (polar residues) spans 1021–1032 (TESLADSKSSGK). The tract at residues 1021–1066 (TESLADSKSSGKGLSPLEEEKLIDENATENGLAGSPKDEDGIIMTN) is disordered. At Thr1079 the chain carries Phosphothreonine. Positions 1096-1354 (FVSLQKMGEG…IDDINNDKWL (259 aa)) constitute a Protein kinase domain. ATP contacts are provided by residues 1102–1110 (MGEGAYGKV) and Lys1125. Asp1230 acts as the Proton acceptor in catalysis.

This sequence belongs to the protein kinase superfamily. Ser/Thr protein kinase family.

The protein localises to the cytoplasm. The catalysed reaction is L-seryl-[protein] + ATP = O-phospho-L-seryl-[protein] + ADP + H(+). It carries out the reaction L-threonyl-[protein] + ATP = O-phospho-L-threonyl-[protein] + ADP + H(+). In terms of biological role, serine/threonine-protein kinase involved in the control of sugar metabolism and translation. Phosphorylates UGP1, which is required for normal glycogen and beta-(1,6)-glucan synthesis. This phosphorylation shifts glucose partitioning toward cell wall glucan synthesis at the expense of glycogen synthesis. The polypeptide is Serine/threonine-protein kinase PSK1 (PSK1) (Saccharomyces cerevisiae (strain ATCC 204508 / S288c) (Baker's yeast)).